Consider the following 377-residue polypeptide: Tryptophan--tRNA ligase, mitochondrial (377 aa).

ATP is bound by residues Gln-21 and 28–31 (HLGN). The 'HIGH' region signature appears at 22–31 (PTSSALHLGN). Asp-181 is a binding site for L-tryptophan. ATP contacts are provided by residues 193–195 (GED), 242–246 (KMSKS), and Lys-245. Residues 242–246 (KMSKS) carry the 'KMSKS' region motif.

This sequence belongs to the class-I aminoacyl-tRNA synthetase family.

The protein localises to the mitochondrion matrix. The enzyme catalyses tRNA(Trp) + L-tryptophan + ATP = L-tryptophyl-tRNA(Trp) + AMP + diphosphate + H(+). The protein is Tryptophan--tRNA ligase, mitochondrial (wars2) of Dictyostelium discoideum (Social amoeba).